A 156-amino-acid chain; its full sequence is ATP synthase subunit b (156 aa).

Residues 7 to 27 traverse the membrane as a helical segment; sequence LFAQMIVFFVLWWVVARFVWP.

The protein belongs to the ATPase B chain family. As to quaternary structure, F-type ATPases have 2 components, F(1) - the catalytic core - and F(0) - the membrane proton channel. F(1) has five subunits: alpha(3), beta(3), gamma(1), delta(1), epsilon(1). F(0) has three main subunits: a(1), b(2) and c(10-14). The alpha and beta chains form an alternating ring which encloses part of the gamma chain. F(1) is attached to F(0) by a central stalk formed by the gamma and epsilon chains, while a peripheral stalk is formed by the delta and b chains.

The protein resides in the cell inner membrane. Its function is as follows. F(1)F(0) ATP synthase produces ATP from ADP in the presence of a proton or sodium gradient. F-type ATPases consist of two structural domains, F(1) containing the extramembraneous catalytic core and F(0) containing the membrane proton channel, linked together by a central stalk and a peripheral stalk. During catalysis, ATP synthesis in the catalytic domain of F(1) is coupled via a rotary mechanism of the central stalk subunits to proton translocation. Component of the F(0) channel, it forms part of the peripheral stalk, linking F(1) to F(0). This is ATP synthase subunit b from Polynucleobacter necessarius subsp. necessarius (strain STIR1).